The primary structure comprises 560 residues: Membrane protein insertase YidC (560 aa).

A helical transmembrane segment spans residues 7-27 (ILIVALAIVSYVMVLKWNQDY). The interval 43 to 72 (APAIPDTPLGNNASASADVPSANGETSAPL) is disordered. 4 consecutive transmembrane segments (helical) span residues 367–387 (IVGN…GIFF), 437–457 (LGGC…YWVL), 468–488 (FMLW…PIIM), and 515–535 (PIIF…YWVV).

Belongs to the OXA1/ALB3/YidC family. Type 1 subfamily. Interacts with the Sec translocase complex via SecD. Specifically interacts with transmembrane segments of nascent integral membrane proteins during membrane integration.

The protein localises to the cell inner membrane. Required for the insertion and/or proper folding and/or complex formation of integral membrane proteins into the membrane. Involved in integration of membrane proteins that insert both dependently and independently of the Sec translocase complex, as well as at least some lipoproteins. Aids folding of multispanning membrane proteins. The chain is Membrane protein insertase YidC from Pseudomonas fluorescens (strain SBW25).